Here is a 160-residue protein sequence, read N- to C-terminus: 2-C-methyl-D-erythritol 2,4-cyclodiphosphate synthase (160 aa).

The a divalent metal cation site is built by Asp11 and His13. 4-CDP-2-C-methyl-D-erythritol 2-phosphate-binding positions include 11-13 (DVH) and 37-38 (HS). Position 45 (His45) interacts with a divalent metal cation. Residues 59–61 (DIG), 64–68 (FPDTD), 103–109 (AQAPKMA), 135–138 (TTTE), Phe142, and Arg145 contribute to the 4-CDP-2-C-methyl-D-erythritol 2-phosphate site.

It belongs to the IspF family. As to quaternary structure, homotrimer. A divalent metal cation is required as a cofactor.

It catalyses the reaction 4-CDP-2-C-methyl-D-erythritol 2-phosphate = 2-C-methyl-D-erythritol 2,4-cyclic diphosphate + CMP. Its pathway is isoprenoid biosynthesis; isopentenyl diphosphate biosynthesis via DXP pathway; isopentenyl diphosphate from 1-deoxy-D-xylulose 5-phosphate: step 4/6. Involved in the biosynthesis of isopentenyl diphosphate (IPP) and dimethylallyl diphosphate (DMAPP), two major building blocks of isoprenoid compounds. Catalyzes the conversion of 4-diphosphocytidyl-2-C-methyl-D-erythritol 2-phosphate (CDP-ME2P) to 2-C-methyl-D-erythritol 2,4-cyclodiphosphate (ME-CPP) with a corresponding release of cytidine 5-monophosphate (CMP). The polypeptide is 2-C-methyl-D-erythritol 2,4-cyclodiphosphate synthase (Thiobacillus denitrificans (strain ATCC 25259 / T1)).